Consider the following 264-residue polypeptide: Apolipoprotein A-I (264 aa).

A signal peptide spans 1–18 (MRGVLVTLAVLFLTGTQA). 2 tandem repeats follow at residues 67–88 (LKLA…EDMT) and 89–110 (PYYR…AELT). Residues 67–264 (LKLADNLDTL…LLDEVQKTMA (198 aa)) are 10 X approximate tandem repeats. The 3; half-length repeat unit spans residues 111-121 (KDLEEVKEKIR). A run of 5 repeats spans residues 122-143 (PFLD…QRLA), 144-165 (PVAQ…AKLT), 166-187 (PVAE…KNLA), 188-209 (PYSS…ERGI), and 210-231 (PQAS…EKMT). The 9; half-length repeat unit spans residues 232-242 (PLVQEFKERLT). Copy 10 of the repeat occupies 243–264 (PYAENLKNRLIDLLDEVQKTMA).

This sequence belongs to the apolipoprotein A1/A4/E family. Major protein of VLDL, HDL, LDL and in chylomicrons. Expressed in a number of tissues including liver, small intestine, lung, kidney, heart and muscle with highest expression in liver and small intestine.

Its subcellular location is the secreted. Its function is as follows. Participates in the reverse transport of cholesterol from tissues to the liver for excretion by promoting cholesterol efflux from tissues and by acting as a cofactor for the lecithin cholesterol acyltransferase (LCAT). This is Apolipoprotein A-I (APOA1) from Coturnix japonica (Japanese quail).